Reading from the N-terminus, the 525-residue chain is Glutamate--cysteine ligase (525 aa).

This sequence belongs to the glutamate--cysteine ligase type 1 family. Type 1 subfamily.

The catalysed reaction is L-cysteine + L-glutamate + ATP = gamma-L-glutamyl-L-cysteine + ADP + phosphate + H(+). The protein operates within sulfur metabolism; glutathione biosynthesis; glutathione from L-cysteine and L-glutamate: step 1/2. This chain is Glutamate--cysteine ligase, found in Alcanivorax borkumensis (strain ATCC 700651 / DSM 11573 / NCIMB 13689 / SK2).